We begin with the raw amino-acid sequence, 463 residues long: MKILFVEPAIFLSAFAMTLTSPLTTQYVYRRIWEETGNYTFSSDSNISECEKNKSSPIFAFQEEVQKKVSRFNLQMDISGLIPGLVSTFILLSISDHYGRKFPMILSSVGALATSVWLCLLCYFAFPFQLLIASTFIGAFCGNYTTFWGACFAYIVDQCKEHKQKTIRIAVIDFLLGLVTGLTGLSSGYFIRELGFGWSFLIIAASLAVNLIYILFFLGDPVKECSSQNVTMSCSEGFKNLFYRTYMLFKNASGKRRFLLCLLLFTTITYFFVVIGIAPIFILYELDSPLCWNEVFIGYGSALGSASFLTSFLGIWLFSYCMEDIHMAFIGIFTTMTGMVMTAFASTTLMMFLARVPFLFTIVPFSVLRSMLSKVVRSTEQGILFACIAFLETLGGVTAVSTFNGIYSATVAWYPGFTFLLSAGLLLLPAISLCVVKCTSWNEGSYELLIQEESSEDASDRAC.

Positions 1 to 20 (MKILFVEPAIFLSAFAMTLT) are cleaved as a signal peptide. The Extracellular portion of the chain corresponds to 21–73 (SPLTTQYVYRRIWEETGNYTFSSDSNISECEKNKSSPIFAFQEEVQKKVSRFN). Asn-38, Asn-46, and Asn-53 each carry an N-linked (GlcNAc...) asparagine glycan. The chain crosses the membrane as a helical span at residues 74–94 (LQMDISGLIPGLVSTFILLSI). Over 95-101 (SDHYGRK) the chain is Cytoplasmic. Residues 102–124 (FPMILSSVGALATSVWLCLLCYF) traverse the membrane as a helical segment. At 125–133 (AFPFQLLIA) the chain is on the extracellular side. The chain crosses the membrane as a helical span at residues 134–156 (STFIGAFCGNYTTFWGACFAYIV). The Cytoplasmic portion of the chain corresponds to 157-170 (DQCKEHKQKTIRIA). Residues 171 to 191 (VIDFLLGLVTGLTGLSSGYFI) form a helical membrane-spanning segment. Over 192–197 (RELGFG) the chain is Extracellular. Residues 198-218 (WSFLIIAASLAVNLIYILFFL) form a helical membrane-spanning segment. Over 219–261 (GDPVKECSSQNVTMSCSEGFKNLFYRTYMLFKNASGKRRFLLC) the chain is Cytoplasmic. A helical transmembrane segment spans residues 262 to 282 (LLLFTTITYFFVVIGIAPIFI). Topologically, residues 283-294 (LYELDSPLCWNE) are extracellular. A helical transmembrane segment spans residues 295 to 315 (VFIGYGSALGSASFLTSFLGI). The Cytoplasmic segment spans residues 316 to 324 (WLFSYCMED). Residues 325-345 (IHMAFIGIFTTMTGMVMTAFA) traverse the membrane as a helical segment. Residues 346–347 (ST) lie on the Extracellular side of the membrane. A helical membrane pass occupies residues 348–368 (TLMMFLARVPFLFTIVPFSVL). At 369-382 (RSMLSKVVRSTEQG) the chain is on the cytoplasmic side. Residues 383–403 (ILFACIAFLETLGGVTAVSTF) form a helical membrane-spanning segment. Over 404–415 (NGIYSATVAWYP) the chain is Extracellular. Residues 416 to 436 (GFTFLLSAGLLLLPAISLCVV) form a helical membrane-spanning segment. Topologically, residues 437–463 (KCTSWNEGSYELLIQEESSEDASDRAC) are cytoplasmic. The short motif at 446–449 (YELL) is the Tyrosine-based lysosomal-sorting motif element.

Belongs to the major facilitator superfamily. SLC46A family.

It is found in the lysosome membrane. The catalysed reaction is estrone 3-sulfate(out) + n H(+)(out) = estrone 3-sulfate(in) + n H(+)(in). The enzyme catalyses 25-hydroxyvitamin D3 sulfate(out) + n H(+)(out) = 25-hydroxyvitamin D3 sulfate(in) + n H(+)(in). It catalyses the reaction cholate(out) + n H(+)(out) = cholate(in) + n H(+)(in). It carries out the reaction glycocholate(out) + n H(+)(out) = glycocholate(in) + n H(+)(in). The catalysed reaction is taurocholate(out) + n H(+)(out) = taurocholate(in) + n H(+)(in). The enzyme catalyses dehydroepiandrosterone 3-sulfate(out) + n H(+)(out) = dehydroepiandrosterone 3-sulfate(in) + n H(+)(in). It catalyses the reaction N-acetyl-D-muramoyl-L-alanyl-D-isoglutamine(out) + n H(+)(out) = N-acetyl-D-muramoyl-L-alanyl-D-isoglutamine(in) + n H(+)(in). It carries out the reaction 2',3'-cGAMP(out) + n H(+)(out) = 2',3'-cGAMP(in) + n H(+)(in). In terms of biological role, lysosomal proton-coupled steroid conjugate and bile acid transporter. Preferentially recognizes lipophilic steroid conjugates or bile acis as endogenous substrates and seems to mediate escape from lysosomes to the cytoplasm. Modulates hepatic cytosolic copper homeostasis, maybe acting as a lysosomal copper transporter and sequestering copper ions in the lysosome. Delivers pathogen-associated molecular patterns to cytosolic pattern recognition receptors as part of the innate immune response to microbes. Selectively transports bacterial muramyl dipeptide (MDP) into the cytosol for recognition by NOD2, triggering inflammatory responses. Likely acts as a redundant importer of cyclic GMP-AMP dinucleotides (cGAMPs) in monocyte and macrophage cell lineages. The transport mechanism, its electrogenicity and stoichiometry remain to be elucidated. The chain is Lysosomal proton-coupled steroid conjugate and bile acid symporter SLC46A3 (SLC46A3) from Pongo abelii (Sumatran orangutan).